We begin with the raw amino-acid sequence, 728 residues long: Catalase-peroxidase (728 aa).

A cross-link (tryptophyl-tyrosyl-methioninium (Trp-Tyr) (with M-244)) is located at residues Trp-91 to Tyr-218. Residue His-92 is the Proton acceptor of the active site. The segment at residues Tyr-218–Met-244 is a cross-link (tryptophyl-tyrosyl-methioninium (Tyr-Met) (with W-91)). Residue His-259 coordinates heme b.

The protein belongs to the peroxidase family. Peroxidase/catalase subfamily. In terms of assembly, homodimer or homotetramer. The cofactor is heme b. In terms of processing, formation of the three residue Trp-Tyr-Met cross-link is important for the catalase, but not the peroxidase activity of the enzyme.

The catalysed reaction is H2O2 + AH2 = A + 2 H2O. The enzyme catalyses 2 H2O2 = O2 + 2 H2O. Functionally, bifunctional enzyme with both catalase and broad-spectrum peroxidase activity. The chain is Catalase-peroxidase from Burkholderia multivorans (strain ATCC 17616 / 249).